The chain runs to 350 residues: Bifunctional methylenetetrahydrofolate dehydrogenase/cyclohydrolase, mitochondrial (350 aa).

A mitochondrion-targeting transit peptide spans Met1–Asn35. Lys50 carries the N6-acetyllysine; alternate modification. Residue Lys50 forms a Glycyl lysine isopeptide (Lys-Gly) (interchain with G-Cter in SUMO2); alternate linkage. Residues Tyr84–Lys88 and Val131–Leu133 contribute to the substrate site. Residues Gly200–Ser202 and Arg233 contribute to the NAD(+) site. Pro309–Gly313 is a substrate binding site.

The protein belongs to the tetrahydrofolate dehydrogenase/cyclohydrolase family. As to quaternary structure, homodimer. Requires Mg(2+) as cofactor.

It localises to the mitochondrion. It carries out the reaction (6R)-5,10-methylene-5,6,7,8-tetrahydrofolate + NAD(+) = (6R)-5,10-methenyltetrahydrofolate + NADH. The enzyme catalyses (6R)-5,10-methenyltetrahydrofolate + H2O = (6R)-10-formyltetrahydrofolate + H(+). Functionally, although its dehydrogenase activity is NAD-specific, it can also utilize NADP at a reduced efficiency. This is Bifunctional methylenetetrahydrofolate dehydrogenase/cyclohydrolase, mitochondrial (MTHFD2) from Homo sapiens (Human).